The chain runs to 307 residues: Elongation factor Ts (307 aa).

An involved in Mg(2+) ion dislocation from EF-Tu region spans residues 80-83; that stretch reads TDFV.

It belongs to the EF-Ts family.

The protein localises to the cytoplasm. Its function is as follows. Associates with the EF-Tu.GDP complex and induces the exchange of GDP to GTP. It remains bound to the aminoacyl-tRNA.EF-Tu.GTP complex up to the GTP hydrolysis stage on the ribosome. This Methylobacterium nodulans (strain LMG 21967 / CNCM I-2342 / ORS 2060) protein is Elongation factor Ts.